Reading from the N-terminus, the 257-residue chain is UPF0246 protein ACICU_02469 (257 aa).

It belongs to the UPF0246 family.

This Acinetobacter baumannii (strain ACICU) protein is UPF0246 protein ACICU_02469.